A 34-amino-acid chain; its full sequence is Tryptophanase operon leader peptide (34 aa).

This chain is Tryptophanase operon leader peptide (tnaL), found in Proteus vulgaris.